The sequence spans 467 residues: Ribosomal protein uS12 methylthiotransferase RimO (467 aa).

Residues 1–27 form a disordered region; it reads MTSNPPDLRPDLAPKPTFGTAPRPDQP. The MTTase N-terminal domain maps to 27–137; the sequence is PTLGMVSLGC…VLDAVHAAVP (111 aa). Residues cysteine 36, cysteine 72, cysteine 101, cysteine 168, cysteine 172, and cysteine 175 each coordinate [4Fe-4S] cluster. Positions 154 to 397 constitute a Radical SAM core domain; it reads LTPRHFSYLK…MEKAQAISEA (244 aa). Residues 400–467 enclose the TRAM domain; sequence ASKVGQTLQV…GEYDLWGALR (68 aa).

Belongs to the methylthiotransferase family. RimO subfamily. [4Fe-4S] cluster is required as a cofactor.

Its subcellular location is the cytoplasm. It catalyses the reaction L-aspartate(89)-[ribosomal protein uS12]-hydrogen + (sulfur carrier)-SH + AH2 + 2 S-adenosyl-L-methionine = 3-methylsulfanyl-L-aspartate(89)-[ribosomal protein uS12]-hydrogen + (sulfur carrier)-H + 5'-deoxyadenosine + L-methionine + A + S-adenosyl-L-homocysteine + 2 H(+). Functionally, catalyzes the methylthiolation of an aspartic acid residue of ribosomal protein uS12. The polypeptide is Ribosomal protein uS12 methylthiotransferase RimO (Ruegeria sp. (strain TM1040) (Silicibacter sp.)).